Consider the following 940-residue polypeptide: Isoleucine--tRNA ligase (940 aa).

The 'HIGH' region motif lies at 58–68 (PYANGSIHIGH). Residue Glu-563 coordinates L-isoleucyl-5'-AMP. The short motif at 604–608 (KMSKS) is the 'KMSKS' region element. Lys-607 lines the ATP pocket. Residues Cys-902, Cys-905, Cys-922, and Cys-925 each contribute to the Zn(2+) site.

The protein belongs to the class-I aminoacyl-tRNA synthetase family. IleS type 1 subfamily. In terms of assembly, monomer. Zn(2+) is required as a cofactor.

The protein resides in the cytoplasm. It carries out the reaction tRNA(Ile) + L-isoleucine + ATP = L-isoleucyl-tRNA(Ile) + AMP + diphosphate. Its function is as follows. Catalyzes the attachment of isoleucine to tRNA(Ile). As IleRS can inadvertently accommodate and process structurally similar amino acids such as valine, to avoid such errors it has two additional distinct tRNA(Ile)-dependent editing activities. One activity is designated as 'pretransfer' editing and involves the hydrolysis of activated Val-AMP. The other activity is designated 'posttransfer' editing and involves deacylation of mischarged Val-tRNA(Ile). In Marinomonas sp. (strain MWYL1), this protein is Isoleucine--tRNA ligase.